Here is a 394-residue protein sequence, read N- to C-terminus: Phosphoglycerate kinase (394 aa).

Residues 21 to 23 (DLN), arginine 36, 60 to 63 (HLGN), arginine 114, and arginine 147 each bind substrate. ATP contacts are provided by residues lysine 198, glutamate 315, and 341–344 (GGET).

Belongs to the phosphoglycerate kinase family. In terms of assembly, monomer.

It is found in the cytoplasm. The enzyme catalyses (2R)-3-phosphoglycerate + ATP = (2R)-3-phospho-glyceroyl phosphate + ADP. It participates in carbohydrate degradation; glycolysis; pyruvate from D-glyceraldehyde 3-phosphate: step 2/5. This chain is Phosphoglycerate kinase, found in Wigglesworthia glossinidia brevipalpis.